We begin with the raw amino-acid sequence, 204 residues long: MSQVDINHARALVYQLLSSLFAREVDEQRLKELTSEAAQQFWEQLSLEANFTQSVDKIRSTLNGIKDDEALLELAADYCGLFLVGTKHSASPYASLYLSGEDEPLLFGEQHQQMSEFLHQSKLQVQSHFPEPADHLAVMLAYMAHLCCHSEDSVQLSFLQTCVDSWLAKFINQLTQCDKNGFYSAVATLTLAWVKQDIAQLEPA.

The protein belongs to the TorD/DmsD family. TorD subfamily.

The protein resides in the cytoplasm. Involved in the biogenesis of TorA. Acts on TorA before the insertion of the molybdenum cofactor and, as a result, probably favors a conformation of the apoenzyme that is competent for acquiring the cofactor. This Shewanella baltica (strain OS223) protein is Chaperone protein TorD.